Reading from the N-terminus, the 379-residue chain is Putative phosphatidate phosphatase (379 aa).

The tract at residues 1-53 is disordered; the sequence is MPAVKIIMSTETSASETTPLRRSENETPDHKELAQSNSNSRQTTVNSNNNNYS. Over residues 9-18 the composition is skewed to polar residues; it reads STETSASETT. A compositionally biased stretch (basic and acidic residues) spans 19-33; it reads PLRRSENETPDHKEL. Residues 35–53 show a composition bias toward low complexity; that stretch reads QSNSNSRQTTVNSNNNNYS. N-linked (GlcNAc...) asparagine glycosylation is present at Asn-51. Helical transmembrane passes span 90–110 and 138–158; these read VGLDVLILLCAGFPILLFFLL and MLYFIGAVIPVGVIFIVEVII. An N-linked (GlcNAc...) asparagine glycan is attached at Asn-169. 2 helical membrane-spanning segments follow: residues 266 to 286 and 330 to 350; these read SFPSGHSSFTFFAMVYLALYL and AGSLIGSISALVVANYVSDLF.

The protein belongs to the PA-phosphatase related phosphoesterase family. Homodimer. This complex seems not to be involved in substrate recognition, it may confer only structural or functional stability. Expressed in embryonic gut in a pattern that guides germ cells towards mesoderm (initially in hindgut and then on lower side of gut). During extended germ band stage, expressed in ectoderm as a medial band throughout the trunk.

It localises to the membrane. It carries out the reaction a 1,2-diacyl-sn-glycero-3-phosphate + H2O = a 1,2-diacyl-sn-glycerol + phosphate. Responsible for guiding the germ cells early in the process of migration from the lumen of the developing gut towards the overlying mesoderm, where the germ cells enter the gonads. May be involved in lipid metabolism. The sequence is that of Putative phosphatidate phosphatase (wun) from Drosophila melanogaster (Fruit fly).